The following is an 89-amino-acid chain: Small ribosomal subunit protein uS15 (89 aa).

It belongs to the universal ribosomal protein uS15 family. As to quaternary structure, part of the 30S ribosomal subunit. Forms a bridge to the 50S subunit in the 70S ribosome, contacting the 23S rRNA.

Functionally, one of the primary rRNA binding proteins, it binds directly to 16S rRNA where it helps nucleate assembly of the platform of the 30S subunit by binding and bridging several RNA helices of the 16S rRNA. Forms an intersubunit bridge (bridge B4) with the 23S rRNA of the 50S subunit in the ribosome. This chain is Small ribosomal subunit protein uS15, found in Histophilus somni (strain 129Pt) (Haemophilus somnus).